The sequence spans 176 residues: NADH-quinone oxidoreductase subunit 10 (176 aa).

5 helical membrane-spanning segments follow: residues 2–22, 26–46, 56–76, 91–111, and 137–157; these read SLLE…VVTL, IHAA…YVAL, VIVY…LLFA, PLAA…LWGL, and FVLL…VALV.

The protein belongs to the complex I subunit 6 family. In terms of assembly, NDH-1 is composed of 15 different subunits, Nqo1 to Nqo15. The complex has a L-shaped structure, with the hydrophobic arm (subunits Nqo7, Nqo8 and Nqo10 to Nqo14) embedded in the membrane and the hydrophilic peripheral arm (subunits Nqo1 to Nqo6, Nqo9 and Nqo15) protruding into the bacterial cytoplasm. The hydrophilic domain contains all the redox centers.

The protein localises to the cell inner membrane. It catalyses the reaction a quinone + NADH + 5 H(+)(in) = a quinol + NAD(+) + 4 H(+)(out). NDH-1 shuttles electrons from NADH, via FMN and iron-sulfur (Fe-S) centers, to quinones in the respiratory chain. The immediate electron acceptor for the enzyme in this species is menaquinone. Couples the redox reaction to proton translocation (for every two electrons transferred, four hydrogen ions are translocated across the cytoplasmic membrane), and thus conserves the redox energy in a proton gradient required for the synthesis of ATP. This Thermus thermophilus (strain ATCC 27634 / DSM 579 / HB8) protein is NADH-quinone oxidoreductase subunit 10 (nqo10).